An 87-amino-acid chain; its full sequence is Large ribosomal subunit protein uL23c (87 aa).

Belongs to the universal ribosomal protein uL23 family. Part of the 50S ribosomal subunit.

The protein localises to the plastid. Its subcellular location is the chloroplast. Functionally, binds to 23S rRNA. This Bigelowiella natans (Pedinomonas minutissima) protein is Large ribosomal subunit protein uL23c (rpl23).